We begin with the raw amino-acid sequence, 116 residues long: Ribonuclease P protein component (116 aa).

Belongs to the RnpA family. Consists of a catalytic RNA component (M1 or rnpB) and a protein subunit.

It carries out the reaction Endonucleolytic cleavage of RNA, removing 5'-extranucleotides from tRNA precursor.. Its function is as follows. RNaseP catalyzes the removal of the 5'-leader sequence from pre-tRNA to produce the mature 5'-terminus. It can also cleave other RNA substrates such as 4.5S RNA. The protein component plays an auxiliary but essential role in vivo by binding to the 5'-leader sequence and broadening the substrate specificity of the ribozyme. This Pseudanabaena sp. (strain PCC 6903) protein is Ribonuclease P protein component.